A 74-amino-acid polypeptide reads, in one-letter code: Exodeoxyribonuclease 7 small subunit (74 aa).

The protein belongs to the XseB family. Heterooligomer composed of large and small subunits.

The protein resides in the cytoplasm. The catalysed reaction is Exonucleolytic cleavage in either 5'- to 3'- or 3'- to 5'-direction to yield nucleoside 5'-phosphates.. Its function is as follows. Bidirectionally degrades single-stranded DNA into large acid-insoluble oligonucleotides, which are then degraded further into small acid-soluble oligonucleotides. The sequence is that of Exodeoxyribonuclease 7 small subunit from Thermotoga neapolitana (strain ATCC 49049 / DSM 4359 / NBRC 107923 / NS-E).